Reading from the N-terminus, the 479-residue chain is Anaerobic nitric oxide reductase flavorubredoxin (479 aa).

The zinc metallo-hydrolase stretch occupies residues Leu-30 to Ile-210. Fe cation contacts are provided by His-79, Glu-81, Asp-83, His-147, Asp-166, and His-227. In terms of domain architecture, Flavodoxin-like spans Ile-254–Ala-393. Residues Thr-260–Asn-264 and Ala-342–Leu-369 contribute to the FMN site. The 52-residue stretch at Gly-423–Leu-474 folds into the Rubredoxin-like domain. Fe cation is bound by residues Cys-428, Cys-431, Cys-461, and Cys-464.

The protein in the N-terminal section; belongs to the zinc metallo-hydrolase group 3 family. In terms of assembly, homotetramer. It depends on Fe cation as a cofactor. FMN is required as a cofactor.

The protein resides in the cytoplasm. The protein operates within nitrogen metabolism; nitric oxide reduction. Functionally, anaerobic nitric oxide reductase; uses NADH to detoxify nitric oxide (NO), protecting several 4Fe-4S NO-sensitive enzymes. Has at least 2 reductase partners, only one of which (NorW, flavorubredoxin reductase) has been identified. NO probably binds to the di-iron center; electrons enter from the NorW at rubredoxin and are transferred sequentially to the FMN center and the di-iron center. Also able to function as an aerobic oxygen reductase. This is Anaerobic nitric oxide reductase flavorubredoxin from Salmonella paratyphi B (strain ATCC BAA-1250 / SPB7).